A 460-amino-acid chain; its full sequence is Adenosylhomocysteinase (460 aa).

Residues T83, D158, and E184 each contribute to the substrate site. Position 185–187 (185–187 (TTT)) interacts with NAD(+). Residues K214 and D218 each contribute to the substrate site. Residues N219, 248-253 (GYGDVG), E271, 327-329 (IGH), and N373 each bind NAD(+).

The protein belongs to the adenosylhomocysteinase family. NAD(+) is required as a cofactor.

The protein resides in the cytoplasm. It carries out the reaction S-adenosyl-L-homocysteine + H2O = L-homocysteine + adenosine. It functions in the pathway amino-acid biosynthesis; L-homocysteine biosynthesis; L-homocysteine from S-adenosyl-L-homocysteine: step 1/1. May play a key role in the regulation of the intracellular concentration of adenosylhomocysteine. The chain is Adenosylhomocysteinase from Bdellovibrio bacteriovorus (strain ATCC 15356 / DSM 50701 / NCIMB 9529 / HD100).